We begin with the raw amino-acid sequence, 142 residues long: Maximins y/Hw (142 aa).

Residues 1 to 18 (MIFKYIVAVSFLIASGYA) form the signal peptide. Residues 19-43 (RSVKNDEQSLSQREVLEEESLREIR) constitute a propeptide that is removed on maturation. A Phenylalanine amide modification is found at phenylalanine 68. Residues 72–121 (TAEDHEVMKRLEAVIRDLDSLDHSEEASERETRGFNQEEIANLFTKKEKR) constitute a propeptide that is removed on maturation. Isoleucine 141 is subject to Isoleucine amide.

It belongs to the bombinin family. As to expression, expressed by the skin glands.

The protein localises to the secreted. Functionally, maximin-y shows antimicrobial activity against bacteria and against the fungus C.albicans. It has little hemolytic activity. Its function is as follows. Maximin-Hw shows antimicrobial activity against bacteria and against the fungus C.albicans. Shows strong hemolytic activity. The polypeptide is Maximins y/Hw (Bombina maxima (Giant fire-bellied toad)).